Consider the following 380-residue polypeptide: Queuine tRNA-ribosyltransferase (380 aa).

The active-site Proton acceptor is Asp-96. Residues 96-100 (DSGGF), Asp-150, Gln-193, and Gly-220 contribute to the substrate site. Residues 251–257 (GVGAPDS) form an RNA binding region. The active-site Nucleophile is the Asp-270. The RNA binding; important for wobble base 34 recognition stretch occupies residues 275 to 279 (TRIAR). Residues Cys-308, Cys-310, Cys-313, and His-339 each coordinate Zn(2+).

This sequence belongs to the queuine tRNA-ribosyltransferase family. Homodimer. Within each dimer, one monomer is responsible for RNA recognition and catalysis, while the other monomer binds to the replacement base PreQ1. Zn(2+) serves as cofactor.

The enzyme catalyses 7-aminomethyl-7-carbaguanine + guanosine(34) in tRNA = 7-aminomethyl-7-carbaguanosine(34) in tRNA + guanine. It participates in tRNA modification; tRNA-queuosine biosynthesis. Functionally, catalyzes the base-exchange of a guanine (G) residue with the queuine precursor 7-aminomethyl-7-deazaguanine (PreQ1) at position 34 (anticodon wobble position) in tRNAs with GU(N) anticodons (tRNA-Asp, -Asn, -His and -Tyr). Catalysis occurs through a double-displacement mechanism. The nucleophile active site attacks the C1' of nucleotide 34 to detach the guanine base from the RNA, forming a covalent enzyme-RNA intermediate. The proton acceptor active site deprotonates the incoming PreQ1, allowing a nucleophilic attack on the C1' of the ribose to form the product. After dissociation, two additional enzymatic reactions on the tRNA convert PreQ1 to queuine (Q), resulting in the hypermodified nucleoside queuosine (7-(((4,5-cis-dihydroxy-2-cyclopenten-1-yl)amino)methyl)-7-deazaguanosine). The chain is Queuine tRNA-ribosyltransferase from Streptococcus agalactiae serotype Ia (strain ATCC 27591 / A909 / CDC SS700).